Consider the following 591-residue polypeptide: Thiol:disulfide interchange protein DsbD 1 (591 aa).

A signal peptide spans 1–18 (MRRLLTLILLLVALPAGA). At 19–175 (GLFDSRPGAS…GPLEHKGKRS (157 aa)) the chain is on the periplasmic side. 2 cysteine pairs are disulfide-bonded: cysteine 134–cysteine 140 and cysteine 191–cysteine 313. The helical transmembrane segment at 176–196 (LLFFFLAGLTLTFTPCVLPML) threads the bilayer. Topologically, residues 197-213 (PILSGVVLRGRPGGGRG) are cytoplasmic. Residues 214 to 234 (FVLSLAYVLPMALCFALLGAL) form a helical membrane-spanning segment. Over 235-251 (MGMFGASLNLQAQLQSP) the chain is Periplasmic. The chain crosses the membrane as a helical span at residues 252 to 272 (WVLVPFAAFFALFAVAMFGFF). At 273–295 (ELRLPGFIREPLDRLAGDARGGS) the chain is on the cytoplasmic side. A helical membrane pass occupies residues 296-316 (ILGAATLGVLSSLLVSPCVSA). At 317–338 (PLAASLLYISASGDAWGGGLQL) the chain is on the periplasmic side. A helical membrane pass occupies residues 339 to 359 (FALGLGMGTPLVVFGAGGGAL). The Cytoplasmic segment spans residues 360–365 (LPKSGA). Residues 366–386 (WMNGVRNAFGVLLLAVAVWLL) traverse the membrane as a helical segment. Residues 387 to 392 (ERVVSG) are Periplasmic-facing. Residues 393-413 (PVALMLWGMLAGGAGLALGAL) form a helical membrane-spanning segment. The Cytoplasmic segment spans residues 414–423 (EFTPKSAARR). A helical membrane pass occupies residues 424 to 444 (LLQLLGLMFLTYAVAAWIGAL). At 445–591 (QGESDPIHPL…ERLRRAATRQ (147 aa)) the chain is on the periplasmic side. Positions 452-589 (HPLGRSVPSI…LAERLRRAAT (138 aa)) constitute a Thioredoxin domain. A disulfide bridge connects residues cysteine 504 and cysteine 507.

Belongs to the thioredoxin family. DsbD subfamily.

It localises to the cell inner membrane. It carries out the reaction [protein]-dithiol + NAD(+) = [protein]-disulfide + NADH + H(+). The enzyme catalyses [protein]-dithiol + NADP(+) = [protein]-disulfide + NADPH + H(+). In terms of biological role, required to facilitate the formation of correct disulfide bonds in some periplasmic proteins and for the assembly of the periplasmic c-type cytochromes. Acts by transferring electrons from cytoplasmic thioredoxin to the periplasm. This transfer involves a cascade of disulfide bond formation and reduction steps. The chain is Thiol:disulfide interchange protein DsbD 1 from Pseudomonas aeruginosa (strain ATCC 15692 / DSM 22644 / CIP 104116 / JCM 14847 / LMG 12228 / 1C / PRS 101 / PAO1).